We begin with the raw amino-acid sequence, 214 residues long: Peptide methionine sulfoxide reductase MsrA 2 (214 aa).

Cys-45 is a catalytic residue.

This sequence belongs to the MsrA Met sulfoxide reductase family.

The catalysed reaction is L-methionyl-[protein] + [thioredoxin]-disulfide + H2O = L-methionyl-(S)-S-oxide-[protein] + [thioredoxin]-dithiol. The enzyme catalyses [thioredoxin]-disulfide + L-methionine + H2O = L-methionine (S)-S-oxide + [thioredoxin]-dithiol. Its function is as follows. Has an important function as a repair enzyme for proteins that have been inactivated by oxidation. Catalyzes the reversible oxidation-reduction of methionine sulfoxide in proteins to methionine. The polypeptide is Peptide methionine sulfoxide reductase MsrA 2 (msrA2) (Synechocystis sp. (strain ATCC 27184 / PCC 6803 / Kazusa)).